Consider the following 476-residue polypeptide: Proline--tRNA ligase 2 (476 aa).

This sequence belongs to the class-II aminoacyl-tRNA synthetase family. ProS type 3 subfamily. In terms of assembly, homodimer.

The protein resides in the cytoplasm. The enzyme catalyses tRNA(Pro) + L-proline + ATP = L-prolyl-tRNA(Pro) + AMP + diphosphate. Functionally, catalyzes the attachment of proline to tRNA(Pro) in a two-step reaction: proline is first activated by ATP to form Pro-AMP and then transferred to the acceptor end of tRNA(Pro). The chain is Proline--tRNA ligase 2 from Bacillus thuringiensis (strain Al Hakam).